A 244-amino-acid polypeptide reads, in one-letter code: 1-(5-phosphoribosyl)-5-[(5-phosphoribosylamino)methylideneamino] imidazole-4-carboxamide isomerase (244 aa).

Residue aspartate 8 is the Proton acceptor of the active site. Residue aspartate 129 is the Proton donor of the active site.

This sequence belongs to the HisA/HisF family.

The protein localises to the cytoplasm. It carries out the reaction 1-(5-phospho-beta-D-ribosyl)-5-[(5-phospho-beta-D-ribosylamino)methylideneamino]imidazole-4-carboxamide = 5-[(5-phospho-1-deoxy-D-ribulos-1-ylimino)methylamino]-1-(5-phospho-beta-D-ribosyl)imidazole-4-carboxamide. It participates in amino-acid biosynthesis; L-histidine biosynthesis; L-histidine from 5-phospho-alpha-D-ribose 1-diphosphate: step 4/9. This is 1-(5-phosphoribosyl)-5-[(5-phosphoribosylamino)methylideneamino] imidazole-4-carboxamide isomerase from Bradyrhizobium sp. (strain ORS 278).